The following is a 308-amino-acid chain: tRNA dimethylallyltransferase (308 aa).

An ATP-binding site is contributed by 14–21 (GPTASGKT). Substrate is bound at residue 16–21 (TASGKT). 3 interaction with substrate tRNA regions span residues 39-42 (DSAL), 163-167 (QRLSR), and 244-249 (RCVGYR).

Belongs to the IPP transferase family. In terms of assembly, monomer. Requires Mg(2+) as cofactor.

It carries out the reaction adenosine(37) in tRNA + dimethylallyl diphosphate = N(6)-dimethylallyladenosine(37) in tRNA + diphosphate. Catalyzes the transfer of a dimethylallyl group onto the adenine at position 37 in tRNAs that read codons beginning with uridine, leading to the formation of N6-(dimethylallyl)adenosine (i(6)A). The protein is tRNA dimethylallyltransferase of Shewanella baltica (strain OS185).